A 177-amino-acid polypeptide reads, in one-letter code: MGNIFEKLFKSLLGKKKMRILILSLDTAGKTTILYKLKLGETVPAVPTVGFCVETVEYKNNTFAVWDVGSHFKIRPLWQHFFQNTKGARSPGSTHQGSLASGVLPIKCSHVEFGMWKGGRSHPFLPHSSRCAGSGGQLDSILPHQSPAWGPWGCKDLSSGFPSFLTSSILWKSAVVK.

A lipid anchor (N-myristoyl glycine) is attached at Gly-2. GTP contacts are provided by residues 24–31, 67–71, and 125–128; these read SLDTAGKT, DVGSH, and LPHS.

It belongs to the small GTPase superfamily. Arf family.

It is found in the golgi apparatus. GTP-binding protein that functions as an allosteric activator of the cholera toxin catalytic subunit, an ADP-ribosyltransferase. Involved in protein trafficking; may modulate vesicle budding and uncoating within the Golgi apparatus. This chain is ADP-ribosylation factor-like protein 17 (ARL17A), found in Homo sapiens (Human).